Here is a 562-residue protein sequence, read N- to C-terminus: Arginine--tRNA ligase (562 aa).

The short motif at 121–131 is the 'HIGH' region element; that stretch reads PNIAKPFSVGH.

It belongs to the class-I aminoacyl-tRNA synthetase family. Monomer.

Its subcellular location is the cytoplasm. The catalysed reaction is tRNA(Arg) + L-arginine + ATP = L-arginyl-tRNA(Arg) + AMP + diphosphate. In Streptococcus uberis (strain ATCC BAA-854 / 0140J), this protein is Arginine--tRNA ligase.